The chain runs to 943 residues: Centromere protein C (943 aa).

Lysine 45 is covalently cross-linked (Glycyl lysine isopeptide (Lys-Gly) (interchain with G-Cter in SUMO2)). The segment at 70–91 (CIQSPSKECQKSHPKSVPVSSK) is disordered. 2 positions are modified to phosphoserine: serine 73 and serine 96. Lysine 119 participates in a covalent cross-link: Glycyl lysine isopeptide (Lys-Gly) (interchain with G-Cter in SUMO2). Threonine 130 carries the post-translational modification Phosphothreonine. Residue lysine 134 forms a Glycyl lysine isopeptide (Lys-Gly) (interchain with G-Cter in SUMO2) linkage. A Phosphoserine modification is found at serine 146. Lysine 180 participates in a covalent cross-link: Glycyl lysine isopeptide (Lys-Gly) (interchain with G-Cter in SUMO2). Threonine 183 carries the post-translational modification Phosphothreonine. A Phosphoserine modification is found at serine 189. Residues lysine 212 and lysine 217 each participate in a glycyl lysine isopeptide (Lys-Gly) (interchain with G-Cter in SUMO2) cross-link. Positions 224–239 (VSDEEDKTSEGQERKP) are enriched in basic and acidic residues. The interval 224-250 (VSDEEDKTSEGQERKPSGSSQNRIRDS) is disordered. Serine 225 bears the Phosphoserine mark. Glycyl lysine isopeptide (Lys-Gly) (interchain with G-Cter in SUMO2) cross-links involve residues lysine 238 and lysine 260. Residues 259–273 (KKSFSTLFLETVKRK) carry the Nuclear localization signal motif. Position 261 is a phosphoserine (serine 261). Glycyl lysine isopeptide (Lys-Gly) (interchain with G-Cter in SUMO2) cross-links involve residues lysine 271, lysine 273, and lysine 297. Serine 316, serine 333, serine 376, and serine 397 each carry phosphoserine. Residues 358–377 (LANDKHSHKPHPVETSQPSD) are disordered. The segment at 403 to 513 (YSKNAEKPSR…SKNKLVPEEV (111 aa)) is disordered. Residues 412–426 (RSKRTIKQKQRRKFM) are compositionally biased toward basic residues. Basic and acidic residues-rich tracts occupy residues 438–463 (QSKD…RNME) and 488–510 (TRKD…KLVP). Serine 439 carries the phosphoserine modification. Residue lysine 440 forms a Glycyl lysine isopeptide (Lys-Gly) (interchain with G-Cter in SUMO2) linkage. Residues 484 to 499 (KKSSTRKDKEESKKKR) carry the Nuclear localization signal motif. A Phosphoserine modification is found at serine 528. Residue lysine 534 forms a Glycyl lysine isopeptide (Lys-Gly) (interchain with G-Cter in SUMO2) linkage. Disordered stretches follow at residues 537–587 (ESPV…ATKG) and 632–717 (DCSR…KQSK). Serine 538 is subject to Phosphoserine. The short motif at 558–574 (RKSTKKTNQSSKNIRKK) is the Nuclear localization signal element. The span at 570 to 583 (NIRKKTIPLKRQKT) shows a compositional bias: basic residues. Residues 633–672 (CSRSTRSSKNEDNIMTAQNVPLKPQTSGYTCNIPTESNLD) show a composition bias toward polar residues. Residue lysine 677 forms a Glycyl lysine isopeptide (Lys-Gly) (interchain with G-Cter in SUMO2) linkage. Serine 684, serine 709, and serine 710 each carry phosphoserine. Over residues 706 to 715 (VHGSSDDSKQ) the composition is skewed to basic and acidic residues. Residue lysine 727 forms a Glycyl lysine isopeptide (Lys-Gly) (interchain with G-Cter in SUMO2) linkage. The residue at position 734 (threonine 734) is a Phosphothreonine. An MIF2 homology domain II region spans residues 737–759 (VRRTKRTRLKPLEYWRGERIDYQ). A phosphoserine mark is found at serine 763 and serine 773. Residues 780–798 (KRKAKENIGKVNKKSNKKR) carry the Nuclear localization signal motif. Residue lysine 807 forms a Glycyl lysine isopeptide (Lys-Gly) (interchain with G-Cter in SUMO2) linkage. The MIF2 homology domain III stretch occupies residues 890-943 (LVFYVNFGDLLCTLHETPYILSTGDSFYVPSGNYYNIKNLRNEESVLLFTQIKR).

Belongs to the CENP-C/MIF2 family. In terms of assembly, oligomer. Component of the CENPA-NAC complex, at least composed of CENPA, CENPC, CENPH, CENPM, CENPN, CENPT and CENPU. The CENPA-NAC complex interacts with the CENPA-CAD complex, composed of CENPI, CENPK, CENPL, CENPO, CENPP, CENPQ, CENPR and CENPS. Binds to DAXX. Interacts with DNMT3B. Interacts directly with CENPA. Identified in a centromere complex containing histones H2A, H2B and H4, and at least CENPA, CENPB, CENPC, CENPT, CENPN, HJURP, SUPT16H, SSRP1 and RSF1. Interacts with MEIKIN.

Its subcellular location is the nucleus. It is found in the chromosome. The protein resides in the centromere. It localises to the kinetochore. Functionally, component of the CENPA-NAC (nucleosome-associated) complex, a complex that plays a central role in assembly of kinetochore proteins, mitotic progression and chromosome segregation. The CENPA-NAC complex recruits the CENPA-CAD (nucleosome distal) complex and may be involved in incorporation of newly synthesized CENPA into centromeres. CENPC recruits DNA methylation and DNMT3B to both centromeric and pericentromeric satellite repeats and regulates the histone code in these regions. In Homo sapiens (Human), this protein is Centromere protein C (CENPC).